Reading from the N-terminus, the 370-residue chain is Histidinol-phosphate aminotransferase 1 (370 aa).

K222 carries the post-translational modification N6-(pyridoxal phosphate)lysine.

Belongs to the class-II pyridoxal-phosphate-dependent aminotransferase family. Histidinol-phosphate aminotransferase subfamily. In terms of assembly, homodimer. Requires pyridoxal 5'-phosphate as cofactor.

The catalysed reaction is L-histidinol phosphate + 2-oxoglutarate = 3-(imidazol-4-yl)-2-oxopropyl phosphate + L-glutamate. It participates in amino-acid biosynthesis; L-histidine biosynthesis; L-histidine from 5-phospho-alpha-D-ribose 1-diphosphate: step 7/9. The protein is Histidinol-phosphate aminotransferase 1 of Bacillus thuringiensis subsp. konkukian (strain 97-27).